The primary structure comprises 417 residues: Serine hydroxymethyltransferase (417 aa).

(6S)-5,6,7,8-tetrahydrofolate contacts are provided by residues Leu-121 and 125–127 (GHL). Lys-229 bears the N6-(pyridoxal phosphate)lysine mark. Residue 355–357 (SPF) coordinates (6S)-5,6,7,8-tetrahydrofolate.

This sequence belongs to the SHMT family. As to quaternary structure, homodimer. Pyridoxal 5'-phosphate is required as a cofactor.

The protein localises to the cytoplasm. The catalysed reaction is (6R)-5,10-methylene-5,6,7,8-tetrahydrofolate + glycine + H2O = (6S)-5,6,7,8-tetrahydrofolate + L-serine. It functions in the pathway one-carbon metabolism; tetrahydrofolate interconversion. It participates in amino-acid biosynthesis; glycine biosynthesis; glycine from L-serine: step 1/1. Catalyzes the reversible interconversion of serine and glycine with tetrahydrofolate (THF) serving as the one-carbon carrier. This reaction serves as the major source of one-carbon groups required for the biosynthesis of purines, thymidylate, methionine, and other important biomolecules. Also exhibits THF-independent aldolase activity toward beta-hydroxyamino acids, producing glycine and aldehydes, via a retro-aldol mechanism. This Stenotrophomonas maltophilia (strain K279a) protein is Serine hydroxymethyltransferase.